Here is a 336-residue protein sequence, read N- to C-terminus: Type II methyltransferase M.PvuII (336 aa).

Tandem repeats lie at residues 11–113 (SNDM…IYNF) and 181–293 (SDRM…WISF). Residues 196-215 (TPKTRPSGHDIGKSFSKDNG) form a disordered region. Positions 202–211 (SGHDIGKSFS) are enriched in basic and acidic residues.

The protein belongs to the N(4)/N(6)-methyltransferase family. N(4) subfamily. In terms of assembly, monomer.

The catalysed reaction is a 2'-deoxycytidine in DNA + S-adenosyl-L-methionine = an N(4)-methyl-2'-deoxycytidine in DNA + S-adenosyl-L-homocysteine + H(+). Functionally, a beta subtype methylase, recognizes the double-stranded sequence 5'-CAGCTG-3', methylates C-4 on both strands, and protects the DNA from cleavage by the PvuII endonuclease. The protein is Type II methyltransferase M.PvuII of Proteus hauseri.